Here is a 391-residue protein sequence, read N- to C-terminus: Multidrug resistance protein MdtL (391 aa).

Topologically, residues 1–3 are cytoplasmic; it reads MSR. Residues 4-24 traverse the membrane as a helical segment; sequence FLICSFALVLLYPAGIDMYLV. The Periplasmic segment spans residues 25 to 41; sequence GLPRIAADLNASEAQLH. The chain crosses the membrane as a helical span at residues 42-62; the sequence is IAFSVYLAGMAAAMLFAGKVA. Residues 63 to 68 are Cytoplasmic-facing; it reads DRSGRK. Residues 69–89 form a helical membrane-spanning segment; sequence PVAIPGAALFIITSVFCSLAE. Residues 90-92 lie on the Periplasmic side of the membrane; sequence TST. Residues 93 to 113 traverse the membrane as a helical segment; it reads LFLAGRFLQGLGAGCCYVVAF. Topologically, residues 114–130 are cytoplasmic; it reads AILRDTLDDRRRAKVLS. Residues 131 to 151 form a helical membrane-spanning segment; sequence LLNGITCIIPVLAPVLGHLIM. The Periplasmic segment spans residues 152–157; it reads LKFPWQ. The chain crosses the membrane as a helical span at residues 158-178; that stretch reads SLFWTMAIMGIAVLMLSLFIL. Over 179-198 the chain is Cytoplasmic; it reads KETRPAAPAASDKSRENSES. A helical membrane pass occupies residues 199-221; it reads LLNRFFLSRVVITTLSVSVILTF. Residues 222–244 are Periplasmic-facing; the sequence is VNTSPVLLMEIMGFERGEYATIM. A helical transmembrane segment spans residues 245–265; the sequence is ALTAGVSMTVSFSTPFALGIF. The Cytoplasmic segment spans residues 266–268; sequence KPR. Residues 269–289 traverse the membrane as a helical segment; the sequence is TLMITSQVLFLAAGITLTVSP. Over 290–292 the chain is Periplasmic; it reads SHA. The helical transmembrane segment at 293–313 threads the bilayer; sequence VSLFGITLICAGFSVGFGVAM. The Cytoplasmic segment spans residues 314 to 330; the sequence is SQALGPFSLRAGVASST. Residues 331–351 traverse the membrane as a helical segment; that stretch reads LGIAQVCGSSLWIWLAAVVGI. Over 352-355 the chain is Periplasmic; that stretch reads SAWN. The helical transmembrane segment at 356–376 threads the bilayer; it reads MLIGILIACSIVSLLLIMFVA. The Cytoplasmic segment spans residues 377–391; it reads PGRPVTAHEEIHHHA.

This sequence belongs to the major facilitator superfamily. DHA1 family. MdtL (TC 2.A.1.2.22) subfamily.

Its subcellular location is the cell inner membrane. Confers resistance to chloramphenicol. This Escherichia coli O157:H7 protein is Multidrug resistance protein MdtL (mdtL).